The sequence spans 404 residues: Formate-dependent phosphoribosylglycinamide formyltransferase (404 aa).

N(1)-(5-phospho-beta-D-ribosyl)glycinamide is bound by residues 25–26 (EL) and Glu-85. Residues Arg-118, Lys-159, 164-169 (SSGKGQ), 199-202 (EGFV), and Glu-207 contribute to the ATP site. The region spanning 123 to 318 (RLAAEELGLP…EFELHARAIL (196 aa)) is the ATP-grasp domain. Mg(2+) contacts are provided by Glu-277 and Glu-289. N(1)-(5-phospho-beta-D-ribosyl)glycinamide contacts are provided by residues Asp-296, Lys-365, and 372–373 (RR).

This sequence belongs to the PurK/PurT family. As to quaternary structure, homodimer.

The enzyme catalyses N(1)-(5-phospho-beta-D-ribosyl)glycinamide + formate + ATP = N(2)-formyl-N(1)-(5-phospho-beta-D-ribosyl)glycinamide + ADP + phosphate + H(+). It participates in purine metabolism; IMP biosynthesis via de novo pathway; N(2)-formyl-N(1)-(5-phospho-D-ribosyl)glycinamide from N(1)-(5-phospho-D-ribosyl)glycinamide (formate route): step 1/1. Functionally, involved in the de novo purine biosynthesis. Catalyzes the transfer of formate to 5-phospho-ribosyl-glycinamide (GAR), producing 5-phospho-ribosyl-N-formylglycinamide (FGAR). Formate is provided by PurU via hydrolysis of 10-formyl-tetrahydrofolate. The sequence is that of Formate-dependent phosphoribosylglycinamide formyltransferase from Burkholderia thailandensis (strain ATCC 700388 / DSM 13276 / CCUG 48851 / CIP 106301 / E264).